The sequence spans 212 residues: ATP phosphoribosyltransferase (212 aa).

The protein belongs to the ATP phosphoribosyltransferase family. Short subfamily. Heteromultimer composed of HisG and HisZ subunits.

Its subcellular location is the cytoplasm. The catalysed reaction is 1-(5-phospho-beta-D-ribosyl)-ATP + diphosphate = 5-phospho-alpha-D-ribose 1-diphosphate + ATP. Its pathway is amino-acid biosynthesis; L-histidine biosynthesis; L-histidine from 5-phospho-alpha-D-ribose 1-diphosphate: step 1/9. In terms of biological role, catalyzes the condensation of ATP and 5-phosphoribose 1-diphosphate to form N'-(5'-phosphoribosyl)-ATP (PR-ATP). Has a crucial role in the pathway because the rate of histidine biosynthesis seems to be controlled primarily by regulation of HisG enzymatic activity. This is ATP phosphoribosyltransferase from Clostridium botulinum (strain Langeland / NCTC 10281 / Type F).